Here is a 258-residue protein sequence, read N- to C-terminus: Meiotic drive suppressor wtf20 (258 aa).

Residues 1–71 form a disordered region; sequence MKNNYTSLKS…GPTEIANPNV (71 aa). Residues 19-30 show a composition bias toward basic and acidic residues; it reads KTDHEIDLEKGL. Transmembrane regions (helical) follow at residues 84-106, 121-140, and 196-216; these read IYFLLRLLISVLAVSVVFFTAWV, FSVTIGITCPILFIAIFYFY, and SASAFTFMAVSSILIFIAETV.

This sequence belongs to the WTF family. Homomer. Interacts with other proteins that exhibit high sequence similarity.

It localises to the spore membrane. The protein localises to the vacuole membrane. Acts as a suppressor component of the dual wtf meiotic drive system, and can suppress but not confer meiotic drive by compatible poisons. Wtf meiotic drive systems promote unequal transmission of alleles from the parental zygote to progeny spores by encoding a poison and an antidote from the same locus; the poison is trans-acting and forms toxic aggregates in all spores within an ascus, wherease the antidote is spore-specific and targets aggregates for degradation by the vacuole. Meiotic drive by wtf systems therefore lead to poisoning of all progeny that do not inherit the dual poison/antidote allele, or express a compatible antidote. In Schizosaccharomyces pombe (strain 972 / ATCC 24843) (Fission yeast), this protein is Meiotic drive suppressor wtf20.